The primary structure comprises 199 residues: UPF0316 protein LA_0606 (199 aa).

2 helical membrane-spanning segments follow: residues 47–67 (IAAS…TQVI) and 73–93 (VFCY…GMIL).

This sequence belongs to the UPF0316 family.

The protein localises to the cell membrane. This Leptospira interrogans serogroup Icterohaemorrhagiae serovar Lai (strain 56601) protein is UPF0316 protein LA_0606.